The following is a 289-amino-acid chain: 4-hydroxy-tetrahydrodipicolinate synthase (289 aa).

Threonine 43 provides a ligand contact to pyruvate. Tyrosine 131 functions as the Proton donor/acceptor in the catalytic mechanism. Lysine 160 (schiff-base intermediate with substrate) is an active-site residue. Valine 200 contacts pyruvate.

This sequence belongs to the DapA family. Homotetramer; dimer of dimers.

Its subcellular location is the cytoplasm. The catalysed reaction is L-aspartate 4-semialdehyde + pyruvate = (2S,4S)-4-hydroxy-2,3,4,5-tetrahydrodipicolinate + H2O + H(+). It participates in amino-acid biosynthesis; L-lysine biosynthesis via DAP pathway; (S)-tetrahydrodipicolinate from L-aspartate: step 3/4. Catalyzes the condensation of (S)-aspartate-beta-semialdehyde [(S)-ASA] and pyruvate to 4-hydroxy-tetrahydrodipicolinate (HTPA). The polypeptide is 4-hydroxy-tetrahydrodipicolinate synthase (Methanococcus maripaludis (strain C7 / ATCC BAA-1331)).